The primary structure comprises 104 residues: Large ribosomal subunit protein eL30 (104 aa).

Belongs to the eukaryotic ribosomal protein eL30 family.

In Leishmania major, this protein is Large ribosomal subunit protein eL30 (RPL30).